We begin with the raw amino-acid sequence, 50 residues long: PsaJ-like protein asl3190 (50 aa).

A helical transmembrane segment spans residues 21–41 (VLAVISISVAFSTWAIFNYIF).

Belongs to the PsaJ family.

It is found in the cellular thylakoid membrane. The chain is PsaJ-like protein asl3190 from Nostoc sp. (strain PCC 7120 / SAG 25.82 / UTEX 2576).